The chain runs to 368 residues: NAD(P)H-quinone oxidoreductase subunit 1, chloroplastic (368 aa).

6 consecutive transmembrane segments (helical) span residues 27–47 (FIWI…GVLV), 97–117 (WLFN…YLVI), 130–150 (IGVF…LMAG), 269–289 (SSLF…PFLL), 308–328 (IIIG…IAIM), and 348–368 (FLLP…AFLL).

It belongs to the complex I subunit 1 family. As to quaternary structure, NDH is composed of at least 16 different subunits, 5 of which are encoded in the nucleus.

Its subcellular location is the plastid. The protein resides in the chloroplast thylakoid membrane. The enzyme catalyses a plastoquinone + NADH + (n+1) H(+)(in) = a plastoquinol + NAD(+) + n H(+)(out). It carries out the reaction a plastoquinone + NADPH + (n+1) H(+)(in) = a plastoquinol + NADP(+) + n H(+)(out). Functionally, NDH shuttles electrons from NAD(P)H:plastoquinone, via FMN and iron-sulfur (Fe-S) centers, to quinones in the photosynthetic chain and possibly in a chloroplast respiratory chain. The immediate electron acceptor for the enzyme in this species is believed to be plastoquinone. Couples the redox reaction to proton translocation, and thus conserves the redox energy in a proton gradient. The chain is NAD(P)H-quinone oxidoreductase subunit 1, chloroplastic from Physcomitrium patens (Spreading-leaved earth moss).